Reading from the N-terminus, the 597-residue chain is Vacuolar protein sorting-associated protein 33A (597 aa).

The protein belongs to the STXBP/unc-18/SEC1 family. Core component of at least two putative endosomal tethering complexes, the homotypic fusion and vacuole protein sorting (HOPS) complex and the class C core vacuole/endosome tethering (CORVET) complex. Their common core is composed of the class C Vps proteins VPS11, VPS16, VPS18 and VPS33A, which in HOPS further associates with VPS39 and VPS41 and in CORVET with VPS8 and TGFBRAP1. Interacts with RAB5C, UVRAG, STX17, MON1A and MON1B. Associates with adaptor protein complex 3 (AP-3) and clathrin. Interacts with PLEKHM1. Ubiquitous.

It is found in the cytoplasmic vesicle. The protein localises to the late endosome membrane. The protein resides in the lysosome membrane. It localises to the early endosome. Its subcellular location is the autophagosome. It is found in the clathrin-coated vesicle. Plays a role in vesicle-mediated protein trafficking to lysosomal compartments including the endocytic membrane transport and autophagic pathways. Believed to act as a core component of the putative HOPS and CORVET endosomal tethering complexes which are proposed to be involved in the Rab5-to-Rab7 endosome conversion probably implicating MON1A/B, and via binding SNAREs and SNARE complexes to mediate tethering and docking events during SNARE-mediated membrane fusion. The HOPS complex is proposed to be recruited to Rab7 on the late endosomal membrane and to regulate late endocytic, phagocytic and autophagic traffic towards lysosomes. The CORVET complex is proposed to function as a Rab5 effector to mediate early endosome fusion probably in specific endosome subpopulations. Required for fusion of endosomes and autophagosomes with lysosomes; the function is dependent on its association with VPS16 but not VIPAS39. The function in autophagosome-lysosome fusion implicates STX17 but not UVRAG. In Rattus norvegicus (Rat), this protein is Vacuolar protein sorting-associated protein 33A (Vps33a).